A 131-amino-acid polypeptide reads, in one-letter code: T3C protein (131 aa).

In Ovis aries (Sheep), this protein is T3C protein.